We begin with the raw amino-acid sequence, 359 residues long: N-acetylneuraminate-9-phosphate synthase (359 aa).

N6-acetyllysine is present on residues K61, K74, and K79. The residue at position 275 (S275) is a Phosphoserine. K290 is subject to N6-acetyllysine. Positions 294–353 (SVVAKVKIPAGTTLTLDMLTVKVGEPKGYPPEDIFNLAGKKVLVTIEEDDTVMEESVESH) constitute an AFP-like domain.

As to expression, ubiquitous.

The protein localises to the cytoplasm. The catalysed reaction is aldehydo-N-acetyl-D-mannosamine 6-phosphate + phosphoenolpyruvate + H2O = N-acetylneuraminate 9-phosphate + phosphate. Functionally, catalyzes condensation of phosphoenolpyruvate (PEP) and N-acetylmannosamine 6-phosphate (ManNAc-6-P) to synthesize N-acetylneuraminate-9-phosphate (Neu5Ac-9-P). Neu5Ac-9-P is the phosphorylated forms of sialic acid N-acetylneuraminic acid (Neu5Ac). In contrast with human ortholog, has no detectable activity towards D-mannose 6-phosphate. In Mus musculus (Mouse), this protein is N-acetylneuraminate-9-phosphate synthase.